The sequence spans 472 residues: H(+)/Cl(-) exchange transporter ClcA (472 aa).

The Cytoplasmic portion of the chain corresponds to 1 to 32; sequence MKAETPSFEAHQFVRVRRGDAVRRLIQRDKTP. A helical transmembrane segment spans residues 33-69; sequence LAVLLMAAVVGTLAGLVGVAFEKSVNWVQNQRIGALA. Residues 70-76 lie on the Periplasmic side of the membrane; it reads QVADHWY. Residues 77–100 form a helical membrane-spanning segment; that stretch reads LVWPLAFILSALLAMVGYFLVRRF. Positions 106-110 match the Selectivity filter part_1 motif; that stretch reads GSGIP. Serine 107 contributes to the chloride binding site. An intramembrane region (helical) is located at residues 109–116; the sequence is IPEIEGAL. The Cytoplasmic portion of the chain corresponds to 117-123; it reads EELRPVR. The next 2 membrane-spanning stretches (helical) occupy residues 124 to 141 and 148 to 166; these read WWRVLPVKFIGGMGTLGA and EGPMVQLGGNIGRMVLDIF. The short motif at 146-150 is the Selectivity filter part_2 element; sequence GREGP. Residues 167 to 176 lie on the Cytoplasmic side of the membrane; sequence RMRSPEARHT. 2 intramembrane regions (helical) span residues 177–189 and 193–201; these read LLATGAASGLSAA and PLAGILFII. At 202 to 214 the chain is on the cytoplasmic side; it reads EEMRPQFRYNLIS. A helical transmembrane segment spans residues 215–232; sequence IKAVFTGVIMSSIVFRIF. The Periplasmic portion of the chain corresponds to 233-252; sequence NGEAAIIEVGKLSNAPVNTL. A helical transmembrane segment spans residues 253-281; it reads WLYLVLGMLFGCFGPLFNFLVLRTQDIFQ. Over 282 to 287 the chain is Cytoplasmic; the sequence is RIHGGN. Residues 288–309 form a helical membrane-spanning segment; it reads IKTWVLMGGVIGGICGLLGLMQ. Residues 310 to 329 lie on the Periplasmic side of the membrane; sequence PSAVGGGFNLIPIAAAGNFS. The next 2 helical transmembrane spans lie at 330-349 and 355-376; these read VGLLLFIFIARVVTTLICFS and GIFAPMLALGTLLGTAFGMAAI. Residues 355–359 carry the Selectivity filter part_3 motif; it reads GIFAP. Isoleucine 356 and phenylalanine 357 together coordinate chloride. Residues 377 to 386 are Periplasmic-facing; that stretch reads PLFPAYHLDA. The helical intramembrane region spans 387–401; that stretch reads GTFAIAGMGALLAAS. The note=Loop between two helices intramembrane region spans 402 to 404; it reads VRA. The helical intramembrane region spans 405-416; the sequence is PLTGIVLVLEMT. Residues 417–421 constitute an intramembrane region (note=Loop between two helices); sequence DNYQL. The helical transmembrane segment at 422-438 threads the bilayer; it reads ILPMIITCLGATLLAQF. The Cytoplasmic portion of the chain corresponds to 439–472; it reads LGGKPLYSTILQRTLAKQEAEQAAKAQQAPRENT. Tyrosine 445 lines the chloride pocket.

Belongs to the chloride channel (TC 2.A.49) family. ClcA subfamily. In terms of assembly, homodimer.

It is found in the cell inner membrane. It catalyses the reaction 2 chloride(in) + H(+)(out) = 2 chloride(out) + H(+)(in). Functionally, proton-coupled chloride transporter. Functions as antiport system and exchanges two chloride ions for 1 proton. Probably acts as an electrical shunt for an outwardly-directed proton pump that is linked to amino acid decarboxylation, as part of the extreme acid resistance (XAR) response. In Klebsiella pneumoniae (strain 342), this protein is H(+)/Cl(-) exchange transporter ClcA.